Reading from the N-terminus, the 600-residue chain is MTASPKNEMSTVFKRLMTYVMPMKGMLTLSILGLIVYGLVDAAFIAFIKPFIDEGFSQNPTVVAGVELPTSGGFSANKDVMLMAPLVVIGMFTLRGVANFVSTYCISYLSAQLIMDMRQQVFEHYLRLPVSYIDRENSGNLISRVTFDTEQIARASGSALISIVRDSITVIGMLALMFFYSWKLSLCILVIGPLMGVVISIVSKRFRKVSVQIQSAMGGVTATTEQMIKGHKNVLSFGGQETESKRFYEVNDRNRYQNMKLAMAQSVSQPVIMIIGSFALAFVLYAASLDSMKLELTAGTFAAILGAMLAMLQPIKNLTRVNAEFQRGIAACTTVFELLDTLPESDTGAHQVERVQGHLRFDNVSFSYPGQAKPALNNIDFDVKPGKTVALVGRSGSGKSTMASLITRFYTGLEQGDIRLDDVSIYDYSLKSLRSQVALVSQQVTLFNDSIANNIAYAYPGEVSREQILKAATLAHAMEFIEQLPEGLDTQVGENGVLLSGGQRQRIAIARAMLRDAPVLILDEATSALDTESEKAIQLGLDNLRHNRTSIVIAHRLSTIESADEILVIDQGKIIERGTHASLIEKKGAYAGLYQMQFGE.

A run of 6 helical transmembrane segments spans residues 28-48 (TLSI…IAFI), 80-100 (VMLM…VANF), 159-179 (ALIS…LMFF), 182-202 (WKLS…ISIV), 267-287 (VSQP…LYAA), and 295-315 (ELTA…LQPI). The ABC transmembrane type-1 domain maps to 29 to 327 (LSILGLIVYG…LTRVNAEFQR (299 aa)). The ABC transporter domain maps to 359 to 596 (LRFDNVSFSY…KGAYAGLYQM (238 aa)). Residue 393–400 (GRSGSGKS) coordinates ATP.

The protein belongs to the ABC transporter superfamily. Lipid exporter (TC 3.A.1.106) family. Homodimer.

It localises to the cell inner membrane. The catalysed reaction is ATP + H2O + lipid A-core oligosaccharideSide 1 = ADP + phosphate + lipid A-core oligosaccharideSide 2.. In terms of biological role, involved in lipopolysaccharide (LPS) biosynthesis. Translocates lipid A-core from the inner to the outer leaflet of the inner membrane. Transmembrane domains (TMD) form a pore in the inner membrane and the ATP-binding domain (NBD) is responsible for energy generation. In Shewanella denitrificans (strain OS217 / ATCC BAA-1090 / DSM 15013), this protein is ATP-dependent lipid A-core flippase.